We begin with the raw amino-acid sequence, 267 residues long: Elsinochrome reductase 1 (267 aa).

Positions 26, 72, 99, and 132 each coordinate NADP(+). The active-site Proton donor is the Ser-149. NADP(+) contacts are provided by Tyr-163, Lys-167, Ile-196, and Thr-198. The active-site Proton acceptor is Tyr-163. Residue Lys-167 is the Lowers pKa of active site Tyr of the active site.

It belongs to the short-chain dehydrogenases/reductases (SDR) family.

Its function is as follows. Reductase; part of the gene cluster that mediates the biosynthesis of elsinochromes, pigments consisting of at least four interconvertible tautomers (A, B, C and D) that have a core phenolic quinone to which various side chains are attached and which play an important role in fungal pathogenesis. The non-reducing polyketide synthase PKS1 was proposed to iteratively catalyze decarboxylation between acetyl-CoA and malonyl-CoA subunits for polyketide chain elongation. The released polyketide undergoes cyclization to form an aromatic ring, and proceeds via serial modification steps to produce the heptaketide back- bone of elsinochrome. As elsinochrome has a symmetrical structure, two identical heptaketides are fused to form a core 1,2-dihydrobenzo-perylene ring structure, which can then be successively modified to produce the various derivatives of elsinochrome. Some of these reactions may be cooperatively carried out, at least in part, by the products of RDT1, OXR1 and PKS1. PRF1, embedded within the elsinochrome cluster possibly functions to stabilize some of the biosynthetic enzymes required for elsinochrome production. As prefoldin is a hexamer containing 2 a and 4 b subunits, additional prefoldin subunits, whose coding genes may not immediately link to the elsinochrome biosynthetic gene cluster, are required to fulfill the chaperone function. In addition, no methyltransferase-coding gene exists within the biosynthetic gene cluster, even though elsinochrome has four methyl groups at positions C3, C7, C8 and C12. Apparently, the identified gene cluster does not contain the entire entourage of genes responsible for elsinochrome biosynthesis. Once elsinochrome is synthesized, it must be exported outside the fungal cells, which is probably accomplished by the ECT1 transporter, to avoid toxicity. The protein is Elsinochrome reductase 1 of Elsinoe fawcettii (Citrus scab fungus).